The following is a 243-amino-acid chain: 5'-methylthioadenosine/S-adenosylhomocysteine nucleosidase (243 aa).

Residue glutamate 12 is the Proton acceptor of the active site. Residues glycine 78, methionine 158, and 179–180 contribute to the substrate site; that span reads ME. Aspartate 203 acts as the Proton donor in catalysis.

This sequence belongs to the PNP/UDP phosphorylase family. MtnN subfamily.

It carries out the reaction S-adenosyl-L-homocysteine + H2O = S-(5-deoxy-D-ribos-5-yl)-L-homocysteine + adenine. The enzyme catalyses S-methyl-5'-thioadenosine + H2O = 5-(methylsulfanyl)-D-ribose + adenine. It catalyses the reaction 5'-deoxyadenosine + H2O = 5-deoxy-D-ribose + adenine. The protein operates within amino-acid biosynthesis; L-methionine biosynthesis via salvage pathway; S-methyl-5-thio-alpha-D-ribose 1-phosphate from S-methyl-5'-thioadenosine (hydrolase route): step 1/2. Catalyzes the irreversible cleavage of the glycosidic bond in both 5'-methylthioadenosine (MTA) and S-adenosylhomocysteine (SAH/AdoHcy) to adenine and the corresponding thioribose, 5'-methylthioribose and S-ribosylhomocysteine, respectively. Also cleaves 5'-deoxyadenosine, a toxic by-product of radical S-adenosylmethionine (SAM) enzymes, into 5-deoxyribose and adenine. This is 5'-methylthioadenosine/S-adenosylhomocysteine nucleosidase from Colwellia psychrerythraea (strain 34H / ATCC BAA-681) (Vibrio psychroerythus).